The chain runs to 20 residues: Photosystem II stability/assembly factor HCF136, chloroplastic (20 aa).

The protein belongs to the Ycf48 family.

The protein resides in the plastid. Its subcellular location is the chloroplast thylakoid lumen. Essential for photosystem II (PSII) biogenesis; required for assembly of an early intermediate in PSII assembly that includes D2 (psbD) and cytochrome b559. This is Photosystem II stability/assembly factor HCF136, chloroplastic from Spinacia oleracea (Spinach).